The primary structure comprises 469 residues: Argininosuccinate lyase (469 aa).

Belongs to the lyase 1 family. Argininosuccinate lyase subfamily.

The protein resides in the cytoplasm. The catalysed reaction is 2-(N(omega)-L-arginino)succinate = fumarate + L-arginine. The protein operates within amino-acid biosynthesis; L-arginine biosynthesis; L-arginine from L-ornithine and carbamoyl phosphate: step 3/3. The polypeptide is Argininosuccinate lyase (Cupriavidus metallidurans (strain ATCC 43123 / DSM 2839 / NBRC 102507 / CH34) (Ralstonia metallidurans)).